Reading from the N-terminus, the 219-residue chain is Large ribosomal subunit protein bL31m (219 aa).

2 stretches are compositionally biased toward basic and acidic residues: residues Lys169–Glu181 and Lys210–Lys219. Disordered regions lie at residues Lys169–Phe188 and Thr200–Lys219.

This sequence belongs to the bacterial ribosomal protein bL31 family. Highly divergent. Component of the mitochondrial large ribosomal subunit (mt-LSU). Mature N.crassa 74S mitochondrial ribosomes consist of a small (37S) and a large (54S) subunit. The 37S small subunit contains a 16S ribosomal RNA (16S mt-rRNA) and 32 different proteins. The 54S large subunit contains a 23S rRNA (23S mt-rRNA) and 42 different proteins. bL31m bridges the mt-LSU central protuberance and the mt-SSU head.

The protein resides in the mitochondrion. Component of the mitochondrial ribosome (mitoribosome), a dedicated translation machinery responsible for the synthesis of mitochondrial genome-encoded proteins, including at least some of the essential transmembrane subunits of the mitochondrial respiratory chain. The mitoribosomes are attached to the mitochondrial inner membrane and translation products are cotranslationally integrated into the membrane. This Neurospora crassa (strain ATCC 24698 / 74-OR23-1A / CBS 708.71 / DSM 1257 / FGSC 987) protein is Large ribosomal subunit protein bL31m (mrpl36).